We begin with the raw amino-acid sequence, 160 residues long: Cytochrome b6-f complex subunit 4 (160 aa).

The next 3 membrane-spanning stretches (helical) occupy residues 36–56 (LLYI…GLAV), 95–115 (LLGV…PFLE), and 131–151 (TVFL…TLPI).

It belongs to the cytochrome b family. PetD subfamily. As to quaternary structure, the 4 large subunits of the cytochrome b6-f complex are cytochrome b6, subunit IV (17 kDa polypeptide, petD), cytochrome f and the Rieske protein, while the 4 small subunits are petG, petL, petM and petN. The complex functions as a dimer.

The protein localises to the plastid. It is found in the chloroplast thylakoid membrane. In terms of biological role, component of the cytochrome b6-f complex, which mediates electron transfer between photosystem II (PSII) and photosystem I (PSI), cyclic electron flow around PSI, and state transitions. In Pisum sativum (Garden pea), this protein is Cytochrome b6-f complex subunit 4.